Consider the following 500-residue polypeptide: Inner membrane transporter YjeM (500 aa).

Over 1–10 (MTHTIKKMSL) the chain is Cytoplasmic. A helical membrane pass occupies residues 11–31 (IGLILMIFTSVFGFANSPSAF). At 32 to 37 (YLMGYS) the chain is on the periplasmic side. A helical transmembrane segment spans residues 38–58 (AIPWYIFSALLFFIPFALMMA). Topologically, residues 59–83 (EMGSAYRKEEGGIYSWMNNSVGPRY) are cytoplasmic. Residues 84–104 (AFIGTFMWFSSYVIWMVSTAA) traverse the membrane as a helical segment. Residues 105-124 (KIWVPFSTFVFGADMTQHWR) are Periplasmic-facing. Residues 125–145 (IAGLEPTQVVGLLAVGWMILV) form a helical membrane-spanning segment. Residues 146–163 (TCVAARGINKIARITAVG) lie on the Cytoplasmic side of the membrane. The helical transmembrane segment at 164 to 184 (GIAVMCLNLVLLLVSVAILLL) threads the bilayer. The Periplasmic segment spans residues 185 to 209 (NGGHFAQEINFTSSPNPGYHSGLAM). Residues 210–230 (LSFVVFAIFAYGGIEAVGGLV) form a helical membrane-spanning segment. The Cytoplasmic portion of the chain corresponds to 231–243 (DKTEKPEKNFAKG). Residues 244–264 (IVFAAIVISIGYSLAIFLWGV) form a helical membrane-spanning segment. Topologically, residues 265 to 308 (STNWQQILSNSAVNLGNITYILMSSLGTTLGNALNLSPEAAMTV) are periplasmic. The helical transmembrane segment at 309–329 (GVWFARITGLSMFLAYTGAFF) threads the bilayer. The Cytoplasmic portion of the chain corresponds to 330–361 (TLSYSPLKAIIQGTPKALWPAPMTTLNANGMP). A helical membrane pass occupies residues 362 to 382 (ATAMWLQCVLVSLFILLVSFG). The Periplasmic segment spans residues 383–394 (GDTASAFYNKLT). Residues 395-415 (LMANVSMTLPYLFLALAFPFF) traverse the membrane as a helical segment. At 416 to 433 (KARQDLERPFVLFKTKAS) the chain is on the cytoplasmic side. A helical transmembrane segment spans residues 434–454 (TLVATGVVVLVVTFANVFTII). Residues 455-462 (QPVIEAGD) lie on the Periplasmic side of the membrane. The helical transmembrane segment at 463–483 (WDSALWMIGGPIFFSLLAMAI) threads the bilayer. Topologically, residues 484–500 (YQNYSSRMSADPEWAAE) are cytoplasmic.

This sequence belongs to the amino acid-polyamine-organocation (APC) superfamily.

It localises to the cell inner membrane. The sequence is that of Inner membrane transporter YjeM (yjeM) from Salmonella typhi.